Here is a 168-residue protein sequence, read N- to C-terminus: Endoribonuclease YbeY (168 aa).

Residues His-126, His-130, and His-136 each coordinate Zn(2+).

It belongs to the endoribonuclease YbeY family. The cofactor is Zn(2+).

The protein localises to the cytoplasm. Functionally, single strand-specific metallo-endoribonuclease involved in late-stage 70S ribosome quality control and in maturation of the 3' terminus of the 16S rRNA. The protein is Endoribonuclease YbeY of Sinorhizobium medicae (strain WSM419) (Ensifer medicae).